The sequence spans 340 residues: MLEIKLSDVSKIISAKLYGDKNFIIKGISSIEDSKPGYISFIYKNKFRKYLPSCKASAIILAKDNLPFCKQFALVVKDPYIAYVKLVKFMYVKKIPKYRIRSTAIVSKKAILGKNIYIGHNTVIESKVKLENNIIIGSGCFIGENTIIGSNTHLWDNTTIHHGTIIGNNCSIQSGSVIGSDGFGYANKNGSWIKIPHLGKVVIGNNVEIGSSTTIDRGSIDNTVIGNGVIIDNQCQIAHNVIIGENTAIAGGVVMAGSLIIGSNCIIGGASVINGHIIICDRVKITGMSMVMRSIKTPGIYSSGVPAQLNKKWKKNTALIMNINKIKKQIKEILKKYKKK.

His-239 (proton acceptor) is an active-site residue.

Belongs to the transferase hexapeptide repeat family. LpxD subfamily. Homotrimer.

It catalyses the reaction a UDP-3-O-[(3R)-3-hydroxyacyl]-alpha-D-glucosamine + a (3R)-hydroxyacyl-[ACP] = a UDP-2-N,3-O-bis[(3R)-3-hydroxyacyl]-alpha-D-glucosamine + holo-[ACP] + H(+). The enzyme catalyses UDP-3-O-[(3R)-3-hydroxytetradecanoyl]-alpha-D-glucosamine + (3R)-hydroxytetradecanoyl-[ACP] = UDP-2-N,3-O-bis[(3R)-3-hydroxytetradecanoyl]-alpha-D-glucosamine + holo-[ACP] + H(+). Its pathway is glycolipid biosynthesis; lipid IV(A) biosynthesis; lipid IV(A) from (3R)-3-hydroxytetradecanoyl-[acyl-carrier-protein] and UDP-N-acetyl-alpha-D-glucosamine: step 3/6. Catalyzes the N-acylation of UDP-3-O-(hydroxytetradecanoyl)glucosamine using 3-hydroxytetradecanoyl-ACP as the acyl donor. Is involved in the biosynthesis of lipid A, a phosphorylated glycolipid that anchors the lipopolysaccharide to the outer membrane of the cell. The protein is UDP-3-O-(3-hydroxymyristoyl)glucosamine N-acyltransferase of Wigglesworthia glossinidia brevipalpis.